The sequence spans 1107 residues: Stress response protein NST1 (1107 aa).

Disordered stretches follow at residues 21–42 (CATQTSPSNMKEPDEPGVALKN), 57–120 (RKDS…DPDA), 201–226 (NQQGGQPTHHSPASSSTSLAGTPHHG), 286–338 (RMKK…SPSP), 525–556 (EEEYDYDTYDDPEYDNQEYDEELSDTESEISE), 605–775 (AKKE…PTHD), 791–820 (QQPMSHISSQPSQSISQLPIQPPSQPFLDM), and 935–967 (GSASIAGTPGNSLPGNSLPPISRNSLSGNSIPG). Basic residues predominate over residues 99-110 (NKKKKKKSKKRH). A compositionally biased stretch (low complexity) spans 207–226 (PTHHSPASSSTSLAGTPHHG). Over residues 298–313 (DLQPQTRISPITSSTD) the composition is skewed to polar residues. Residues 321–338 (TSNVSTPSHSESVSSPSP) show a composition bias toward low complexity. Residues 508 to 733 (QYVDQRINQL…EQLKKEQQPK (226 aa)) are a coiled coil. 2 stretches are compositionally biased toward basic and acidic residues: residues 605–621 (AKKEKELKKLKQKEKAK) and 630–738 (AKDE…EQTQ). Residues 745–775 (PSQTSQSNPSVSDPISSRQDNSVSSLDPTHD) show a composition bias toward polar residues. A compositionally biased stretch (low complexity) spans 791–809 (QQPMSHISSQPSQSISQLP). Positions 935–949 (GSASIAGTPGNSLPG) are enriched in polar residues. Low complexity predominate over residues 958-967 (NSLSGNSIPG).

It belongs to the NST1 family.

The protein resides in the cytoplasm. Its function is as follows. May act as a negative regulator of salt tolerance. The protein is Stress response protein NST1 (NST1) of Meyerozyma guilliermondii (strain ATCC 6260 / CBS 566 / DSM 6381 / JCM 1539 / NBRC 10279 / NRRL Y-324) (Yeast).